A 155-amino-acid chain; its full sequence is Small ribosomal subunit protein uS7c (155 aa).

It belongs to the universal ribosomal protein uS7 family. In terms of assembly, part of the 30S ribosomal subunit.

It is found in the plastid. It localises to the chloroplast. Functionally, one of the primary rRNA binding proteins, it binds directly to 16S rRNA where it nucleates assembly of the head domain of the 30S subunit. In Saururus cernuus (Lizard's tail), this protein is Small ribosomal subunit protein uS7c (rps7).